The chain runs to 918 residues: MFGAIARKLFGNANDRVVKGLRKQVEAINAIEPKLTGLSDAELQMRTDWLRDRLAKGETLDDILPDAFATVREAAKRTLGQRHFDVQLMGGMVLHTGKIAEMRTGEGKTLVATLAVYLNALEGKGVHVVTVNDYLAKRDSGWMGQIYRFLGLSVGCIVHGLDDAERRAAYAADITYGTNNEFGFDYLRDNMKYRLADMVQRPFNFAIVDEVDSILIDEARTPLIISGPSTDSSELYIALDKVVRETVQDGDFEKDEKARAVSLTEGGTEKVAQRLIEIGLLKTGDLYDIHNVTLVHHVNQALRAHKLFTRDVDYIVKDDKVVIIDEFTGRMMEGRRYSEGLHQALEAKEGVTIQRENQTLASITFQNYFRLYPKLAGMTGTAMTEAAEFMEIYGLPVVDMPTNLPVRRKDQDDEVYRTADEKYAAIITLIEECRARQQPVLVGTVSIEKSELLSDFLKKKKVPHNVLNARYHEQEAYIVAQAGRPGAVTIATNMAGRGTDIQLGGNLEMRIEHELSDLPEGPEREAAIARIRDEIAAAKEVVLKAGGLYVVGTERHESRRIDNQLRGRSGRQGDPGASKFFLSLEDDLMRIFGSQRLDGMLQKLGLQEGEAIIHPWINKALEKAQTKVEAHNFDIRKNLLKYDNVMNDQRKVVYEQRRDVMDAEDVQDTVVSMRHEVIQEMVSKAIPPNAYAEQWNTDQLHEEVMRVLGADLPVKEWAKEEGIADAEIVERLTRFADETMAEKEAAYGATLMRSIEKSLLLQILDQQWKDHLLNLDHLRQGINLRAYAQRDPLNEYKREAFGLFETMLASLREQVTTVLMHVQVRQADADLPTPPEPVGELTREDPALVPAGAEALPPGMVRRADDQRLRPQAYGAGALPVAETLERDTPESWRNTPRNAPCPCGSGKKYKHCHGQAR.

ATP-binding positions include Q87, 105 to 109 (GEGKT), and D500. Positions 876–918 (AGALPVAETLERDTPESWRNTPRNAPCPCGSGKKYKHCHGQAR) are disordered. Zn(2+) is bound by residues C902, C904, C913, and H914. A compositionally biased stretch (basic residues) spans 908–918 (KKYKHCHGQAR).

It belongs to the SecA family. In terms of assembly, monomer and homodimer. Part of the essential Sec protein translocation apparatus which comprises SecA, SecYEG and auxiliary proteins SecDF-YajC and YidC. It depends on Zn(2+) as a cofactor.

Its subcellular location is the cell inner membrane. It localises to the cytoplasm. It carries out the reaction ATP + H2O + cellular proteinSide 1 = ADP + phosphate + cellular proteinSide 2.. Part of the Sec protein translocase complex. Interacts with the SecYEG preprotein conducting channel. Has a central role in coupling the hydrolysis of ATP to the transfer of proteins into and across the cell membrane, serving both as a receptor for the preprotein-SecB complex and as an ATP-driven molecular motor driving the stepwise translocation of polypeptide chains across the membrane. The polypeptide is Protein translocase subunit SecA (Rhodospirillum centenum (strain ATCC 51521 / SW)).